Consider the following 630-residue polypeptide: tRNA uridine 5-carboxymethylaminomethyl modification enzyme MnmG (630 aa).

15-20 (GAGHAG) contributes to the FAD binding site. 274 to 288 (GPRYCPSIEDKIVRF) lines the NAD(+) pocket.

This sequence belongs to the MnmG family. Homodimer. Heterotetramer of two MnmE and two MnmG subunits. FAD is required as a cofactor.

The protein localises to the cytoplasm. In terms of biological role, NAD-binding protein involved in the addition of a carboxymethylaminomethyl (cmnm) group at the wobble position (U34) of certain tRNAs, forming tRNA-cmnm(5)s(2)U34. This Alkaliphilus oremlandii (strain OhILAs) (Clostridium oremlandii (strain OhILAs)) protein is tRNA uridine 5-carboxymethylaminomethyl modification enzyme MnmG.